The chain runs to 691 residues: Elongation factor G (691 aa).

Residues 8–283 (KKVRNIGIAA…AVVAYLPAPD (276 aa)) form the tr-type G domain. GTP contacts are provided by residues 17 to 24 (AHIDAGKT), 81 to 85 (DTPGH), and 135 to 138 (NKMD).

Belongs to the TRAFAC class translation factor GTPase superfamily. Classic translation factor GTPase family. EF-G/EF-2 subfamily.

The protein resides in the cytoplasm. Catalyzes the GTP-dependent ribosomal translocation step during translation elongation. During this step, the ribosome changes from the pre-translocational (PRE) to the post-translocational (POST) state as the newly formed A-site-bound peptidyl-tRNA and P-site-bound deacylated tRNA move to the P and E sites, respectively. Catalyzes the coordinated movement of the two tRNA molecules, the mRNA and conformational changes in the ribosome. The polypeptide is Elongation factor G (Campylobacter jejuni subsp. jejuni serotype O:6 (strain 81116 / NCTC 11828)).